A 430-amino-acid chain; its full sequence is Glutamate-1-semialdehyde 2,1-aminomutase (430 aa).

Lysine 265 carries the post-translational modification N6-(pyridoxal phosphate)lysine.

This sequence belongs to the class-III pyridoxal-phosphate-dependent aminotransferase family. HemL subfamily. In terms of assembly, homodimer. It depends on pyridoxal 5'-phosphate as a cofactor.

It is found in the cytoplasm. It carries out the reaction (S)-4-amino-5-oxopentanoate = 5-aminolevulinate. It functions in the pathway porphyrin-containing compound metabolism; protoporphyrin-IX biosynthesis; 5-aminolevulinate from L-glutamyl-tRNA(Glu): step 2/2. The protein is Glutamate-1-semialdehyde 2,1-aminomutase of Shewanella baltica (strain OS223).